The primary structure comprises 213 residues: Ras-related protein RabK1 (213 aa).

Residue 14–21 (GDRMVGKL) participates in GTP binding. Positions 36–43 (GNSIPFDF) match the Effector region motif. Residues 61–65 (NTHGS) and 119–122 (TKSD) each bind GTP.

This sequence belongs to the small GTPase superfamily. Rab family.

The sequence is that of Ras-related protein RabK1 (rabK1) from Dictyostelium discoideum (Social amoeba).